Consider the following 247-residue polypeptide: tRNA pseudouridine synthase A 1 (247 aa).

The Nucleophile role is filled by aspartate 53. Substrate is bound at residue tyrosine 111.

This sequence belongs to the tRNA pseudouridine synthase TruA family. Homodimer.

It carries out the reaction uridine(38/39/40) in tRNA = pseudouridine(38/39/40) in tRNA. Formation of pseudouridine at positions 38, 39 and 40 in the anticodon stem and loop of transfer RNAs. The chain is tRNA pseudouridine synthase A 1 from Bacillus cereus (strain ATCC 10987 / NRS 248).